Consider the following 531-residue polypeptide: 2,3-bisphosphoglycerate-independent phosphoglycerate mutase (531 aa).

Residues D13 and S63 each coordinate Mn(2+). Catalysis depends on S63, which acts as the Phosphoserine intermediate. Substrate-binding positions include H124, 154–155, R187, R193, 261–264, and K342; these read RD and RPDR. Residues D420, H424, D462, H463, and H480 each coordinate Mn(2+).

It belongs to the BPG-independent phosphoglycerate mutase family. In terms of assembly, monomer. The cofactor is Mn(2+).

The enzyme catalyses (2R)-2-phosphoglycerate = (2R)-3-phosphoglycerate. The protein operates within carbohydrate degradation; glycolysis; pyruvate from D-glyceraldehyde 3-phosphate: step 3/5. Its function is as follows. Catalyzes the interconversion of 2-phosphoglycerate and 3-phosphoglycerate. In Mycoplasma capricolum subsp. capricolum (strain California kid / ATCC 27343 / NCTC 10154), this protein is 2,3-bisphosphoglycerate-independent phosphoglycerate mutase.